The primary structure comprises 411 residues: Kelch domain-containing protein 10 (411 aa).

6 Kelch repeats span residues 72 to 133 (NLYV…LHGH), 135 to 186 (LLVF…IIHG), 187 to 239 (FLYV…HDGQ), 240 to 288 (RIYV…RRCH), 296 to 342 (EVFI…AVTP), and 345 to 388 (CMYI…YFPQ).

The protein belongs to the KLHDC10 family. In terms of assembly, component of a CRL2 E3 ubiquitin-protein ligase complex, also named ECS (Elongin BC-CUL2/5-SOCS-box protein) complex, composed of CUL2, Elongin BC (ELOB and ELOC), RBX1 and substrate-specific adapter KLHDC10.

It functions in the pathway protein modification; protein ubiquitination. Substrate-recognition component of a Cul2-RING (CRL2) E3 ubiquitin-protein ligase complex of the DesCEND (destruction via C-end degrons) pathway, which recognizes a C-degron located at the extreme C terminus of target proteins, leading to their ubiquitination and degradation. The C-degron recognized by the DesCEND pathway is usually a motif of less than ten residues and can be present in full-length proteins, truncated proteins or proteolytically cleaved forms. The CRL2(KLHDC10) complex specifically recognizes proteins with a proline-glycine (Pro-Gly) or an alanine tail (CAT tail) at the C-terminus, leading to their ubiquitination and degradation. The CRL2(KLHDC10) complex is involved in the ribosome-associated quality control (RQC) pathway, which mediates the extraction of incompletely synthesized nascent chains from stalled ribosomes: CRL2(KLHDC10) acts downstream of NEMF and recognizes CAT tails associated with stalled nascent chains, leading to their ubiquitination and degradation. The chain is Kelch domain-containing protein 10 from Xenopus laevis (African clawed frog).